The following is a 224-amino-acid chain: Urease accessory protein UreF (224 aa).

Belongs to the UreF family. In terms of assembly, ureD, UreF and UreG form a complex that acts as a GTP-hydrolysis-dependent molecular chaperone, activating the urease apoprotein by helping to assemble the nickel containing metallocenter of UreC. The UreE protein probably delivers the nickel.

It localises to the cytoplasm. Required for maturation of urease via the functional incorporation of the urease nickel metallocenter. The sequence is that of Urease accessory protein UreF from Azotobacter vinelandii (strain DJ / ATCC BAA-1303).